Here is a 275-residue protein sequence, read N- to C-terminus: Bis(5'-nucleosyl)-tetraphosphatase, symmetrical (275 aa).

Belongs to the Ap4A hydrolase family.

It catalyses the reaction P(1),P(4)-bis(5'-adenosyl) tetraphosphate + H2O = 2 ADP + 2 H(+). Functionally, hydrolyzes diadenosine 5',5'''-P1,P4-tetraphosphate to yield ADP. The chain is Bis(5'-nucleosyl)-tetraphosphatase, symmetrical from Hamiltonella defensa subsp. Acyrthosiphon pisum (strain 5AT).